The following is a 167-amino-acid chain: Ribosome maturation factor RimM (167 aa).

The PRC barrel domain occupies 92–166 (DGVYYYRELL…EVRVELMEGL (75 aa)).

Belongs to the RimM family. As to quaternary structure, binds ribosomal protein uS19.

It localises to the cytoplasm. An accessory protein needed during the final step in the assembly of 30S ribosomal subunit, possibly for assembly of the head region. Essential for efficient processing of 16S rRNA. May be needed both before and after RbfA during the maturation of 16S rRNA. It has affinity for free ribosomal 30S subunits but not for 70S ribosomes. This is Ribosome maturation factor RimM from Lactobacillus delbrueckii subsp. bulgaricus (strain ATCC 11842 / DSM 20081 / BCRC 10696 / JCM 1002 / NBRC 13953 / NCIMB 11778 / NCTC 12712 / WDCM 00102 / Lb 14).